An 852-amino-acid polypeptide reads, in one-letter code: MQRKTLLSACIALALSGQGWAADITEVETTTGEKKNTNVTCPADPGKLSPEELKRLPSECSPLVEQNLMPWLSTGAAALITALAVVELNDDDDHHHRNNSPLPPTPPDDESDDTPVPPTPGGDEIIPDDPDDTPTPPKPVSFNNDVILDKTEKTLTIRDSVFTYTENADGTISLQDSNGRKATINLWQIDEANNTVALEGVSADGATKWQYNHNGELVITGDNATVNNNGKTTVDGKDSTGTEINGNNGKVIQDGDLDVSGGGHGIDITGDSATVDNKGTMTVTDPESMGIQIDGDKAIVNNEGESTITNGGTGTQINGDDATANNNGKTTVDGKDSTGTEINGNNGKVIQDGDLDVSGGGHGIDITGDSATVDNKGTMTVTDPESIGIQVDGDQAVVNNEGESAITNGGTGTQINGDDATANNNGKTTVDGKDSTGTEIAGNNGKVIQDGDLDVSGGGHGIDITGDSATVDNKGTMTVTDPESIGIQIDGDQAIVNNEGESTITNGGTGTQINGNDATANNSGKTTVDGKDSTGTKIAGNIGIVNLDGSLTVTGGAHGVENIGDNGTVNNKGDIVVSDTGSIGVLINGEGATVSNTGDVNVSNEATGFSITTNSGKVSLAGSMQVGDFSTGVDLNGNNNSVTLAAKDLKVVGQKATGINVSGDANTVNITGNVLVDKDKTADNAAEYFFDPSVGINVYGSDNNVTLDGKLTVVSDSEVTSRQSNLFDGSAEKTSGLVVIGDGNTVNMNGGLELIGEKNALADGSQVTSLRTGYSYTSVIVVSGESSVYLNGDTTISGEFPLGFAGVIRVQDKALLEIGSGATLTMQDIDSFEHHGTRTLDLPLYFQTSVIT.

The signal sequence occupies residues 1-21 (MQRKTLLSACIALALSGQGWA). 5 disordered regions span residues 30–50 (TTGE…KLSP), 91–145 (DDDH…FNND), 307–354 (TITN…QDGD), 407–449 (TNGG…KVIQ), and 506–531 (NGGT…VDGK). A compositionally biased stretch (low complexity) spans 307-319 (TITNGGTGTQING). Residues 339-348 (GTEINGNNGK) are compositionally biased toward polar residues. The segment covering 506–516 (NGGTGTQINGN) has biased composition (low complexity). Over residues 517-526 (DATANNSGKT) the composition is skewed to polar residues.

It is found in the secreted. Functionally, the full-length protein (which is about 2000 amino acids long) is part of the autotransporter family. This Escherichia coli (strain K12) protein is Exported protein YdbA (ydbA).